A 357-amino-acid chain; its full sequence is Protein RecA (357 aa).

67–74 (GPESSGKT) provides a ligand contact to ATP.

This sequence belongs to the RecA family.

The protein resides in the cytoplasm. Functionally, can catalyze the hydrolysis of ATP in the presence of single-stranded DNA, the ATP-dependent uptake of single-stranded DNA by duplex DNA, and the ATP-dependent hybridization of homologous single-stranded DNAs. It interacts with LexA causing its activation and leading to its autocatalytic cleavage. The protein is Protein RecA of Leifsonia xyli subsp. xyli (strain CTCB07).